Reading from the N-terminus, the 164-residue chain is Large ribosomal subunit protein uL10 (164 aa).

Belongs to the universal ribosomal protein uL10 family. Part of the ribosomal stalk of the 50S ribosomal subunit. The N-terminus interacts with L11 and the large rRNA to form the base of the stalk. The C-terminus forms an elongated spine to which L12 dimers bind in a sequential fashion forming a multimeric L10(L12)X complex.

Its function is as follows. Forms part of the ribosomal stalk, playing a central role in the interaction of the ribosome with GTP-bound translation factors. The polypeptide is Large ribosomal subunit protein uL10 (Photobacterium profundum (strain SS9)).